The following is a 348-amino-acid chain: Protein RecA (348 aa).

Residue 66–73 (GPESSGKT) participates in ATP binding.

This sequence belongs to the RecA family.

The protein localises to the cytoplasm. In terms of biological role, can catalyze the hydrolysis of ATP in the presence of single-stranded DNA, the ATP-dependent uptake of single-stranded DNA by duplex DNA, and the ATP-dependent hybridization of homologous single-stranded DNAs. It interacts with LexA causing its activation and leading to its autocatalytic cleavage. This Neisseria meningitidis serogroup C / serotype 2a (strain ATCC 700532 / DSM 15464 / FAM18) protein is Protein RecA.